The chain runs to 314 residues: MARRDGDSWEITESVGTTALGVASARDAETRSPNPLISDPYAGHFLAAAGDGAWNAYRFDGEPPAALVEAEPRLVERIDAMRSYVACRTKFFDDFFGDASTSGIRQAVILASGLDARAWRLDWPRDAVLFELDLPRVLAFKAETLDKQGATPRIRHVPVAVDLRDDWPAALRAGGFDVGRPAAWIAEGLLPYLPPAAQDLLFERIDTLSAPGSRIAVENFGEDFFNPETLARQRERGQAFRRVAEEMQGQDIPDVADLWYLEERTDAGEFLAGRGWRVTSETAVALLGRHGRDIPADLPDATPNSAFLFAQKAD.

Residues aspartate 133 and 162–163 (DL) contribute to the S-adenosyl-L-methionine site.

Belongs to the UPF0677 family.

Functionally, exhibits S-adenosyl-L-methionine-dependent methyltransferase activity. In Mycobacteroides abscessus (strain ATCC 19977 / DSM 44196 / CCUG 20993 / CIP 104536 / JCM 13569 / NCTC 13031 / TMC 1543 / L948) (Mycobacterium abscessus), this protein is Putative S-adenosyl-L-methionine-dependent methyltransferase MAB_3886c.